We begin with the raw amino-acid sequence, 117 residues long: Large ribosomal subunit protein bL20 (117 aa).

The protein belongs to the bacterial ribosomal protein bL20 family.

Functionally, binds directly to 23S ribosomal RNA and is necessary for the in vitro assembly process of the 50S ribosomal subunit. It is not involved in the protein synthesizing functions of that subunit. In Rickettsia felis (strain ATCC VR-1525 / URRWXCal2) (Rickettsia azadi), this protein is Large ribosomal subunit protein bL20.